A 1381-amino-acid polypeptide reads, in one-letter code: Hepatocyte growth factor receptor (1381 aa).

Positions 1 to 24 are cleaved as a signal peptide; it reads MKAPAVLAPGILVLLFTLVQRSNG. Topologically, residues 25–934 are extracellular; sequence ECKEALTKSE…VQPDQNFTGL (910 aa). Residues 27–515 form the Sema domain; sequence KEALTKSEMN…TGKKITKIPL (489 aa). Asn-45 is a glycosylation site (N-linked (GlcNAc...) asparagine). Intrachain disulfides connect Cys-95–Cys-101, Cys-98–Cys-160, Cys-133–Cys-141, and Cys-172–Cys-175. N-linked (GlcNAc...) asparagine glycosylation is present at Asn-106. The N-linked (GlcNAc...) asparagine glycan is linked to Asn-149. N-linked (GlcNAc...) asparagine glycosylation occurs at Asn-202. 2 disulfide bridges follow: Cys-298–Cys-363 and Cys-385–Cys-397. Asn-399 carries an N-linked (GlcNAc...) asparagine glycan. 4 cysteine pairs are disulfide-bonded: Cys-520–Cys-538, Cys-526–Cys-561, Cys-529–Cys-545, and Cys-541–Cys-551. IPT/TIG domains are found at residues 563 to 655, 657 to 739, and 742 to 836; these read PAIY…FSYV, PIIT…FSYL, and PIVY…LIYV. Thr-582 carries an O-linked (Man) threonine glycan. N-linked (GlcNAc...) asparagine glycosylation is found at Asn-607 and Asn-635. O-linked (Man) threonine glycosylation is found at Thr-676 and Thr-761. 3 N-linked (GlcNAc...) asparagine glycosylation sites follow: Asn-785, Asn-879, and Asn-930. A helical membrane pass occupies residues 935-955; sequence IAGVVSISIALLLLLAFFLWL. The Cytoplasmic segment spans residues 956 to 1381; the sequence is KKRKQIKDLG…QDNADGEVDT (426 aa). Residue Ser-966 is modified to Phosphoserine. Residue Thr-977 is modified to Phosphothreonine. A phosphoserine mark is found at Ser-990, Ser-997, and Ser-1000. Phosphotyrosine is present on Tyr-1003. The Protein kinase domain maps to 1078 to 1345; that stretch reads VHFNEVIGRG…RISAIFSTFI (268 aa). ATP-binding positions include 1084-1092 and Lys-1110; that span reads IGRGHFGCV. Asp-1204 acts as the Proton acceptor in catalysis. Residues 1212 to 1381 form an interaction with RANBP9 region; that stretch reads LDEKFTVKVA…QDNADGEVDT (170 aa). Tyr-1230 carries the post-translational modification Phosphotyrosine. 2 positions are modified to phosphotyrosine; by autocatalysis: Tyr-1234 and Tyr-1235. Phosphothreonine is present on Thr-1289. The interaction with MUC20 stretch occupies residues 1320–1359; it reads WHPKAEMRPSFSELVSRISAIFSTFIGEHYVHVNATYVNV. A phosphotyrosine; by autocatalysis mark is found at Tyr-1349 and Tyr-1356. The residue at position 1365 (Tyr-1365) is a Phosphotyrosine.

The protein belongs to the protein kinase superfamily. Tyr protein kinase family. As to quaternary structure, heterodimer made of an alpha chain (50 kDa) and a beta chain (145 kDa) which are disulfide linked. Binds PLXNB1. Interacts when phosphorylated with downstream effectors including STAT3, PIK3R1, SRC, PCLG1, GRB2 and GAB1. Interacts with SPSB1, SPSB2 and SPSB4. Interacts with INPP5D/SHIP1. When phosphorylated at Tyr-1356, interacts with INPPL1/SHIP2. Interacts with RANBP9 and RANBP10, as well as SPSB1, SPSB2, SPSB3 and SPSB4. SPSB1 binding occurs in the presence and in the absence of HGF, however HGF treatment has a positive effect on this interaction. Interacts with MUC20; prevents interaction with GRB2 and suppresses hepatocyte growth factor-induced cell proliferation. Interacts with GRB10. Interacts with PTPN1 and PTPN2. Interacts with HSP90AA1 and HSP90AB1; the interaction suppresses MET kinase activity. Interacts with tensin TNS3. Interacts (when phosphorylated) with tensin TNS4 (via SH2 domain); the interaction increases MET protein stability by inhibiting MET endocytosis and subsequent lysosomal degradation. In terms of processing, autophosphorylated in response to ligand binding on Tyr-1234 and Tyr-1235 in the kinase domain leading to further phosphorylation of Tyr-1349 and Tyr-1356 in the C-terminal multifunctional docking site. Dephosphorylated by PTPRJ at Tyr-1349 and Tyr-1365. Dephosphorylated by PTPN1 and PTPN2. Post-translationally, ubiquitinated. Ubiquitination by CBL regulates the receptor stability and activity through proteasomal degradation. O-mannosylation of IPT/TIG domains by TMEM260 is required for protein maturation. O-mannosylated residues are composed of single mannose glycans that are not elongated or modified.

The protein localises to the membrane. It carries out the reaction L-tyrosyl-[protein] + ATP = O-phospho-L-tyrosyl-[protein] + ADP + H(+). In its inactive state, the C-terminal tail interacts with the catalytic domain and inhibits the kinase activity. Upon ligand binding, the C-terminal tail is displaced and becomes phosphorylated, thus increasing the kinase activity. Receptor tyrosine kinase that transduces signals from the extracellular matrix into the cytoplasm by binding to hepatocyte growth factor/HGF ligand. Regulates many physiological processes including proliferation, scattering, morphogenesis and survival. Ligand binding at the cell surface induces autophosphorylation of MET on its intracellular domain that provides docking sites for downstream signaling molecules. Following activation by ligand, interacts with the PI3-kinase subunit PIK3R1, PLCG1, SRC, GRB2, STAT3 or the adapter GAB1. Recruitment of these downstream effectors by MET leads to the activation of several signaling cascades including the RAS-ERK, PI3 kinase-AKT, or PLCgamma-PKC. The RAS-ERK activation is associated with the morphogenetic effects while PI3K/AKT coordinates prosurvival effects. During embryonic development, MET signaling plays a role in gastrulation, development and migration of muscles and neuronal precursors, angiogenesis and kidney formation. In adults, participates in wound healing as well as organ regeneration and tissue remodeling. Also promotes differentiation and proliferation of hematopoietic cells. The sequence is that of Hepatocyte growth factor receptor (MET) from Plecturocebus moloch (Dusky titi monkey).